The following is a 739-amino-acid chain: Sulfate transporter (739 aa).

Residues 1–44 form a disordered region; that stretch reads MSSENKEQHNLSPRDLPEEAYGFPPELPLGAQRGSSTDLRQFEP. S12 is modified (phosphoserine). The next 2 membrane-spanning stretches (helical) occupy residues 112 to 132 and 137 to 157; these read MMSGLIVGILLVPQSIAYSLL and PIYGLYTSFFASIIYFLFGTS. A glycan (N-linked (GlcNAc...) asparagine) is linked at N205. 2 helical membrane-spanning segments follow: residues 227-247 and 255-275; these read FMAGVYQVAMGFFQVGFVSVY and GFVTGASFTILTSQAKYLLGL. Residue N357 is glycosylated (N-linked (GlcNAc...) asparagine). 4 consecutive transmembrane segments (helical) span residues 378–398, 420–440, 455–475, and 524–544; these read LIPNVAVDAIAISIIGFAITV, AIGFCNIIPSFFHCITTSAAL, LSAIVTSLVLLLVLLLIAPLF, and LLSTEIGLLVGVCFSMFCVIL. Residues 568–719 form the STAS domain; that stretch reads TYKNLRSKSG…YSLSEAVAFA (152 aa).

It belongs to the SLC26A/SulP transporter (TC 2.A.53) family. In terms of processing, N-glycosylated. As to expression, cartilage and intestine. Expressed in the kidney (at protein level).

It localises to the cell membrane. It is found in the apical cell membrane. It catalyses the reaction oxalate(in) + sulfate(out) = oxalate(out) + sulfate(in). The catalysed reaction is sulfate(out) + 2 chloride(in) = sulfate(in) + 2 chloride(out). It carries out the reaction oxalate(out) + 2 chloride(in) = oxalate(in) + 2 chloride(out). The enzyme catalyses bromide(in) + chloride(out) = bromide(out) + chloride(in). It catalyses the reaction nitrate(in) + chloride(out) = nitrate(out) + chloride(in). The catalysed reaction is iodide(in) + chloride(out) = iodide(out) + chloride(in). Sulfate transporter which mediates sulfate uptake into chondrocytes in order to maintain adequate sulfation of proteoglycans which is needed for cartilage development. Mediates electroneutral anion exchange of sulfate ions for oxalate ions, sulfate and oxalate ions for chloride and/or hydroxyl ions and chloride ions for bromide, iodide and nitrate ions. The coupling of sulfate transport to both hydroxyl and chloride ions likely serves to ensure transport at both acidic pH when most sulfate uptake is mediated by sulfate-hydroxide exchange and alkaline pH when most sulfate uptake is mediated by sulfate-chloride exchange. Essential for chondrocyte proliferation, differentiation and cell size expansion. In Rattus norvegicus (Rat), this protein is Sulfate transporter (Slc26a2).